We begin with the raw amino-acid sequence, 107 residues long: Large ribosomal subunit protein uL24 (107 aa).

The protein belongs to the universal ribosomal protein uL24 family. Part of the 50S ribosomal subunit.

Its function is as follows. One of two assembly initiator proteins, it binds directly to the 5'-end of the 23S rRNA, where it nucleates assembly of the 50S subunit. In terms of biological role, one of the proteins that surrounds the polypeptide exit tunnel on the outside of the subunit. The sequence is that of Large ribosomal subunit protein uL24 from Natranaerobius thermophilus (strain ATCC BAA-1301 / DSM 18059 / JW/NM-WN-LF).